We begin with the raw amino-acid sequence, 142 residues long: Large ribosomal subunit protein uL13 (142 aa).

Belongs to the universal ribosomal protein uL13 family. Part of the 50S ribosomal subunit.

This protein is one of the early assembly proteins of the 50S ribosomal subunit, although it is not seen to bind rRNA by itself. It is important during the early stages of 50S assembly. In Pasteurella multocida (strain Pm70), this protein is Large ribosomal subunit protein uL13.